Reading from the N-terminus, the 297-residue chain is tRNA dimethylallyltransferase (297 aa).

Position 15–22 (15–22 (GPTASGKS)) interacts with ATP. 17-22 (TASGKS) is a substrate binding site. Interaction with substrate tRNA regions lie at residues 40 to 43 (DSMQ) and 164 to 168 (QRIVR).

The protein belongs to the IPP transferase family. In terms of assembly, monomer. Requires Mg(2+) as cofactor.

It carries out the reaction adenosine(37) in tRNA + dimethylallyl diphosphate = N(6)-dimethylallyladenosine(37) in tRNA + diphosphate. Functionally, catalyzes the transfer of a dimethylallyl group onto the adenine at position 37 in tRNAs that read codons beginning with uridine, leading to the formation of N6-(dimethylallyl)adenosine (i(6)A). The polypeptide is tRNA dimethylallyltransferase (Rhizobium johnstonii (strain DSM 114642 / LMG 32736 / 3841) (Rhizobium leguminosarum bv. viciae)).